Consider the following 901-residue polypeptide: Probable inorganic carbon transporter subunit DabA (901 aa).

4 residues coordinate Zn(2+): Cys424, Asp426, His606, and Cys621.

Belongs to the inorganic carbon transporter (TC 9.A.2) DabA family. In terms of assembly, forms a complex with DabB. Requires Zn(2+) as cofactor.

The protein resides in the cell membrane. Functionally, part of an energy-coupled inorganic carbon pump. The sequence is that of Probable inorganic carbon transporter subunit DabA from Staphylococcus aureus (strain MRSA252).